A 569-amino-acid chain; its full sequence is Probable diguanylate cyclase DgcQ (569 aa).

2 consecutive transmembrane segments (helical) span residues 25 to 45 (LGPG…STLL) and 365 to 385 (IALT…WYVI). The 136-residue stretch at 433-568 (HPFSVIQVDL…GRNRVCASDN (136 aa)) folds into the GGDEF domain. Aspartate 441 is a binding site for Mg(2+). Substrate contacts are provided by asparagine 449, histidine 454, and aspartate 458. A Mg(2+)-binding site is contributed by glutamate 484. Glutamate 484 functions as the Proton acceptor in the catalytic mechanism.

In terms of assembly, homodimer. It depends on Mg(2+) as a cofactor.

Its subcellular location is the cell inner membrane. The enzyme catalyses 2 GTP = 3',3'-c-di-GMP + 2 diphosphate. Its pathway is glycan metabolism; bacterial cellulose biosynthesis. The protein operates within purine metabolism; 3',5'-cyclic di-GMP biosynthesis. Functionally, catalyzes the synthesis of cyclic-di-GMP (c-di-GMP) via the condensation of 2 GTP molecules. Cyclic-di-GMP is a second messenger which controls cell surface-associated traits in bacteria. Involved in the regulation of cellulose production. This chain is Probable diguanylate cyclase DgcQ, found in Shigella sonnei (strain Ss046).